The following is a 680-amino-acid chain: Dihydroxyacetone phosphate acyltransferase (680 aa).

Ser-12 and Ser-17 each carry phosphoserine. The HXXXXD motif motif lies at 162 to 167 (HRSYID). Position 643 is an N6-acetyllysine (Lys-643). The Microbody targeting signal motif lies at 678–680 (AKL).

It belongs to the GPAT/DAPAT family. As to quaternary structure, part of a heterotrimeric complex composed of GNPAT, AGPS and a modified form of GNPAT.

The protein localises to the peroxisome membrane. It carries out the reaction dihydroxyacetone phosphate + an acyl-CoA = a 1-acylglycerone 3-phosphate + CoA. The catalysed reaction is dihydroxyacetone phosphate + hexadecanoyl-CoA = 1-hexadecanoylglycerone 3-phosphate + CoA. The protein operates within membrane lipid metabolism; glycerophospholipid metabolism. Functionally, dihydroxyacetonephosphate acyltransferase catalyzing the first step in the biosynthesis of plasmalogens, a subset of phospholipids that differ from other glycerolipids by having an alkyl chain attached through a vinyl ether linkage at the sn-1 position of the glycerol backbone, and which unique physical properties have an impact on various aspects of cell signaling and membrane biology. The sequence is that of Dihydroxyacetone phosphate acyltransferase from Homo sapiens (Human).